A 353-amino-acid chain; its full sequence is Photosystem II protein D1 (353 aa).

Threonine 2 carries the N-acetylthreonine modification. Position 2 is a phosphothreonine (threonine 2). 3 consecutive transmembrane segments (helical) span residues 29-46, 118-133, and 142-156; these read YIGW…TATS, HFLL…EWEL, and WIAV…AATA. Histidine 118 contributes to the chlorophyll a binding site. Tyrosine 126 is a pheophytin a binding site. [CaMn4O5] cluster is bound by residues aspartate 170 and glutamate 189. Residues 197–218 traverse the membrane as a helical segment; the sequence is FHMLGVAGVFGGSLFSAMHGSL. Histidine 198 serves as a coordination point for chlorophyll a. A quinone is bound by residues histidine 215 and 264-265; that span reads SF. Residue histidine 215 participates in Fe cation binding. Residue histidine 272 participates in Fe cation binding. Residues 274-288 traverse the membrane as a helical segment; that stretch reads FLAAWPVVGIWFTAL. [CaMn4O5] cluster-binding residues include histidine 332, glutamate 333, aspartate 342, and alanine 344. The propeptide occupies 345-353; it reads AVEAPSING.

This sequence belongs to the reaction center PufL/M/PsbA/D family. In terms of assembly, PSII is composed of 1 copy each of membrane proteins PsbA, PsbB, PsbC, PsbD, PsbE, PsbF, PsbH, PsbI, PsbJ, PsbK, PsbL, PsbM, PsbT, PsbX, PsbY, PsbZ, Psb30/Ycf12, at least 3 peripheral proteins of the oxygen-evolving complex and a large number of cofactors. It forms dimeric complexes. The D1/D2 heterodimer binds P680, chlorophylls that are the primary electron donor of PSII, and subsequent electron acceptors. It shares a non-heme iron and each subunit binds pheophytin, quinone, additional chlorophylls, carotenoids and lipids. D1 provides most of the ligands for the Mn4-Ca-O5 cluster of the oxygen-evolving complex (OEC). There is also a Cl(-1) ion associated with D1 and D2, which is required for oxygen evolution. The PSII complex binds additional chlorophylls, carotenoids and specific lipids. is required as a cofactor. Tyr-161 forms a radical intermediate that is referred to as redox-active TyrZ, YZ or Y-Z. In terms of processing, C-terminally processed by CTPA; processing is essential to allow assembly of the oxygen-evolving complex and thus photosynthetic growth.

The protein localises to the plastid. Its subcellular location is the chloroplast thylakoid membrane. It carries out the reaction 2 a plastoquinone + 4 hnu + 2 H2O = 2 a plastoquinol + O2. Its function is as follows. This is one of the two reaction center proteins of photosystem II. Functionally, photosystem II (PSII) is a light-driven water:plastoquinone oxidoreductase that uses light energy to abstract electrons from H(2)O, generating O(2) and a proton gradient subsequently used for ATP formation. It consists of a core antenna complex that captures photons, and an electron transfer chain that converts photonic excitation into a charge separation. The D1/D2 (PsbA/PsbD) reaction center heterodimer binds P680, the primary electron donor of PSII as well as several subsequent electron acceptors. The chain is Photosystem II protein D1 from Pisum sativum (Garden pea).